The sequence spans 230 residues: NAD(P)H-hydrate epimerase (230 aa).

One can recognise a YjeF N-terminal domain in the interval 11-218; sequence AIDVDQELFT…ALQRKYGLNL (208 aa). (6S)-NADPHX is bound at residue 61–65; sequence NNGGD. The K(+) site is built by asparagine 62 and aspartate 126. (6S)-NADPHX is bound by residues 130–136 and aspartate 159; that span reads GFSFKPP. Serine 162 lines the K(+) pocket.

The protein belongs to the NnrE/AIBP family. Requires K(+) as cofactor.

The enzyme catalyses (6R)-NADHX = (6S)-NADHX. It carries out the reaction (6R)-NADPHX = (6S)-NADPHX. Its function is as follows. Catalyzes the epimerization of the S- and R-forms of NAD(P)HX, a damaged form of NAD(P)H that is a result of enzymatic or heat-dependent hydration. This is a prerequisite for the S-specific NAD(P)H-hydrate dehydratase to allow the repair of both epimers of NAD(P)HX. This is NAD(P)H-hydrate epimerase from Drosophila yakuba (Fruit fly).